The sequence spans 283 residues: Pantothenate synthetase (283 aa).

M26–H33 provides a ligand contact to ATP. H33 serves as the catalytic Proton donor. Residue Q57 coordinates (R)-pantoate. Q57 lines the beta-alanine pocket. An ATP-binding site is contributed by G144–D147. Residue Q150 coordinates (R)-pantoate. Residues I173 and L181–R184 each bind ATP.

This sequence belongs to the pantothenate synthetase family. As to quaternary structure, homodimer.

It is found in the cytoplasm. It carries out the reaction (R)-pantoate + beta-alanine + ATP = (R)-pantothenate + AMP + diphosphate + H(+). It functions in the pathway cofactor biosynthesis; (R)-pantothenate biosynthesis; (R)-pantothenate from (R)-pantoate and beta-alanine: step 1/1. Its function is as follows. Catalyzes the condensation of pantoate with beta-alanine in an ATP-dependent reaction via a pantoyl-adenylate intermediate. The sequence is that of Pantothenate synthetase from Polynucleobacter necessarius subsp. necessarius (strain STIR1).